The following is a 358-amino-acid chain: Fructose-bisphosphate aldolase 2, cytoplasmic (358 aa).

Arg-39 is a substrate binding site. Glu-183 (proton acceptor) is an active-site residue. The active-site Schiff-base intermediate with dihydroxyacetone-P is Lys-225. Substrate contacts are provided by residues 266 to 268 (SGG) and Arg-298.

This sequence belongs to the class I fructose-bisphosphate aldolase family. Homotetramer.

The protein resides in the cytoplasm. It is found in the cytosol. The catalysed reaction is beta-D-fructose 1,6-bisphosphate = D-glyceraldehyde 3-phosphate + dihydroxyacetone phosphate. It functions in the pathway carbohydrate degradation; glycolysis; D-glyceraldehyde 3-phosphate and glycerone phosphate from D-glucose: step 4/4. Functionally, fructose-bisphosphate aldolase that plays a key role in glycolysis and gluconeogenesis. This Oryza sativa subsp. japonica (Rice) protein is Fructose-bisphosphate aldolase 2, cytoplasmic.